A 452-amino-acid chain; its full sequence is Fructose-2,6-bisphosphatase (452 aa).

Residues 1–223 are 6-phosphofructo-2-kinase; that stretch reads MGYSTISNDN…VFYVMNIRPK (223 aa). 20 to 28 is a binding site for ATP; sequence GLPARGKSF. Beta-D-fructose 6-phosphate contacts are provided by Arg53 and Arg78. The active site involves Asp104. Beta-D-fructose 6-phosphate contacts are provided by Thr106 and Arg112. Residue 143-148 coordinates ATP; the sequence is NAKDIG. Residues Arg169 and Tyr173 each contribute to the beta-D-fructose 6-phosphate site. A fructose-2,6-bisphosphatase region spans residues 224 to 452; it reads PKYIWLSRHG…LNDSPLEDKF (229 aa). Arg231 serves as a coordination point for beta-D-fructose 2,6-bisphosphate. Catalysis depends on His232, which acts as the Tele-phosphohistidine intermediate. 2 residues coordinate beta-D-fructose 2,6-bisphosphate: Asn238 and Gly244. Residue Glu302 is the Proton donor/acceptor of the active site. Residues Tyr313, Arg327, Lys331, Tyr342, Gln368, and Arg372 each coordinate beta-D-fructose 2,6-bisphosphate. ATP is bound at residue 324 to 327; the sequence is FKAR. ATP-binding positions include 368-372 and Tyr404; that span reads QAVLR. 2 positions are modified to phosphoserine: Ser435 and Ser446.

It in the C-terminal section; belongs to the phosphoglycerate mutase family.

It carries out the reaction beta-D-fructose 2,6-bisphosphate + H2O = beta-D-fructose 6-phosphate + phosphate. Its activity is regulated as follows. Inhibited by fructose 6-P, activated by glycerol 3-P. Monofunctional, high-specificity fructose-2,6-bisphosphatase, which releases phosphate from the 2-position of fructose 2,6-bisphosphate. Has no detectable 6-phosphofructo-2-kinase activity. The sequence is that of Fructose-2,6-bisphosphatase from Saccharomyces cerevisiae (strain ATCC 204508 / S288c) (Baker's yeast).